Consider the following 337-residue polypeptide: Anthranilate phosphoribosyltransferase (337 aa).

Residues G81, 84–85, S89, 91–94, 109–117, and A121 contribute to the 5-phospho-alpha-D-ribose 1-diphosphate site; these read GD, NVST, and KHGNRALSS. An anthranilate-binding site is contributed by G81. S93 contacts Mg(2+). N112 is an anthranilate binding site. R167 contributes to the anthranilate binding site. Mg(2+) contacts are provided by D226 and E227.

It belongs to the anthranilate phosphoribosyltransferase family. In terms of assembly, homodimer. Requires Mg(2+) as cofactor.

The catalysed reaction is N-(5-phospho-beta-D-ribosyl)anthranilate + diphosphate = 5-phospho-alpha-D-ribose 1-diphosphate + anthranilate. The protein operates within amino-acid biosynthesis; L-tryptophan biosynthesis; L-tryptophan from chorismate: step 2/5. Catalyzes the transfer of the phosphoribosyl group of 5-phosphorylribose-1-pyrophosphate (PRPP) to anthranilate to yield N-(5'-phosphoribosyl)-anthranilate (PRA). This Bradyrhizobium sp. (strain ORS 278) protein is Anthranilate phosphoribosyltransferase.